Reading from the N-terminus, the 342-residue chain is Dihydroorotase (342 aa).

Positions 13 and 15 each coordinate Zn(2+). Substrate-binding positions include 15-17 (HLR) and asparagine 41. Zn(2+) is bound by residues lysine 98, histidine 135, and histidine 173. An N6-carboxylysine modification is found at lysine 98. Substrate is bound at residue histidine 135. Leucine 218 contributes to the substrate binding site. A Zn(2+)-binding site is contributed by aspartate 246. Aspartate 246 is a catalytic residue. Residues histidine 250 and alanine 262 each coordinate substrate.

Belongs to the metallo-dependent hydrolases superfamily. DHOase family. Class II DHOase subfamily. Homodimer. Requires Zn(2+) as cofactor.

The catalysed reaction is (S)-dihydroorotate + H2O = N-carbamoyl-L-aspartate + H(+). It participates in pyrimidine metabolism; UMP biosynthesis via de novo pathway; (S)-dihydroorotate from bicarbonate: step 3/3. In terms of biological role, catalyzes the reversible cyclization of carbamoyl aspartate to dihydroorotate. This Aliivibrio fischeri (strain ATCC 700601 / ES114) (Vibrio fischeri) protein is Dihydroorotase.